A 615-amino-acid chain; its full sequence is MPIQVLPPQLANQIAAGEVVERPASVVKELVENSLDAGATRIDIDIERGGAKLIRIRDNGCGIKKDELALALARHATSKIASLDDLEAIISLGFRGEALASISSVSRLTLTSRTAEQQEAWQAYAEGRDMDVTVKPAAHPVGTTLEVLDLFYNTPARRKFLRTEKTEFNHIDEIIRRIALARFDVTINLSHNGKIVRQYRAVPEGGQKERRLGAICGTAFLEQALAIEWQHGDLTLRGWVADPNHTTPALAEIQYCYVNGRMMRDRLINHAIRQACEDKLGADQQPAFVLYLEIDPHQVDVNVHPAKHEVRFHQSRLVHDFIYQGVLSVLQQQLETPLPLDDEPQPAPRAIPENRVAAGRNHFAEPAVREPVAPRYTPAPASGSRPAAPWPNAQPGYQKQQGEVYRQLLQTPAPMQKPKAPEPQEPALAANSQSFGRVLTIVHSDCALLERDGNISLLALPVAERWLRQAQLTPGEAPVCAQPLLIPLRLKVSGEEKSALEKAQSALAELGIDFQSDAQHVTIRAVPLPLRQQNLQILIPELIGYLAKQSVFEPGNIAQWIARNLMSEHAQWSMAQAITLLADVERLCPQLVKTPPGGLLQSVDLHPAIKALKDE.

Residues 369–397 are disordered; sequence REPVAPRYTPAPASGSRPAAPWPNAQPGY. A compositionally biased stretch (low complexity) spans 378-391; the sequence is PAPASGSRPAAPWP.

Belongs to the DNA mismatch repair MutL/HexB family.

Functionally, this protein is involved in the repair of mismatches in DNA. It is required for dam-dependent methyl-directed DNA mismatch repair. May act as a 'molecular matchmaker', a protein that promotes the formation of a stable complex between two or more DNA-binding proteins in an ATP-dependent manner without itself being part of a final effector complex. The chain is DNA mismatch repair protein MutL from Escherichia coli (strain SMS-3-5 / SECEC).